We begin with the raw amino-acid sequence, 148 residues long: Large-conductance mechanosensitive channel (148 aa).

The next 2 membrane-spanning stretches (helical) occupy residues 16–36 (VMDL…VNSI) and 89–109 (GSFI…FLMV).

This sequence belongs to the MscL family. In terms of assembly, homopentamer.

Its subcellular location is the cell inner membrane. Channel that opens in response to stretch forces in the membrane lipid bilayer. May participate in the regulation of osmotic pressure changes within the cell. This chain is Large-conductance mechanosensitive channel, found in Paraburkholderia xenovorans (strain LB400).